Here is a 239-residue protein sequence, read N- to C-terminus: Large ribosomal subunit protein uL2 (239 aa).

Residues 200–239 form a disordered region; sequence VNHPHGGKEHHIGRPSTVSRRAPPGRKVGHIAARRTGRRK. Residues 222 to 239 show a composition bias toward basic residues; the sequence is PPGRKVGHIAARRTGRRK.

This sequence belongs to the universal ribosomal protein uL2 family. In terms of assembly, part of the 50S ribosomal subunit. Forms a bridge to the 30S subunit in the 70S ribosome.

Functionally, one of the primary rRNA binding proteins. Required for association of the 30S and 50S subunits to form the 70S ribosome, for tRNA binding and peptide bond formation. It has been suggested to have peptidyltransferase activity; this is somewhat controversial. Makes several contacts with the 16S rRNA in the 70S ribosome. This is Large ribosomal subunit protein uL2 from Thermococcus gammatolerans (strain DSM 15229 / JCM 11827 / EJ3).